The primary structure comprises 206 residues: MTRLLFVLVLSVCLLPVPVKASAVKSLKTFVNKALTFQANFSQTLLDKNFQVIRKASGSMMFERPGKFRWTYDQPYQQLIVGDGKQVWFYDQDLAQVTVHRLDQALGSTPAALLAGGNTIERDFNLQEIDVQGETEWLEAIPKNQENSFELIRLGFSKTGILREMVLRDSFDQVTWLIFSEIEQNPTLTPDLFQFTPPEGVDVIRD.

The first 21 residues, 1–21 (MTRLLFVLVLSVCLLPVPVKA), serve as a signal peptide directing secretion.

The protein belongs to the LolA family. In terms of assembly, monomer.

It localises to the periplasm. Participates in the translocation of lipoproteins from the inner membrane to the outer membrane. Only forms a complex with a lipoprotein if the residue after the N-terminal Cys is not an aspartate (The Asp acts as a targeting signal to indicate that the lipoprotein should stay in the inner membrane). The sequence is that of Outer-membrane lipoprotein carrier protein from Nitrosomonas europaea (strain ATCC 19718 / CIP 103999 / KCTC 2705 / NBRC 14298).